A 373-amino-acid polypeptide reads, in one-letter code: 4-hydroxy-3-methylbut-2-en-1-yl diphosphate synthase (flavodoxin) (373 aa).

[4Fe-4S] cluster is bound by residues Cys-270, Cys-273, Cys-305, and Glu-312.

The protein belongs to the IspG family. The cofactor is [4Fe-4S] cluster.

The enzyme catalyses (2E)-4-hydroxy-3-methylbut-2-enyl diphosphate + oxidized [flavodoxin] + H2O + 2 H(+) = 2-C-methyl-D-erythritol 2,4-cyclic diphosphate + reduced [flavodoxin]. Its pathway is isoprenoid biosynthesis; isopentenyl diphosphate biosynthesis via DXP pathway; isopentenyl diphosphate from 1-deoxy-D-xylulose 5-phosphate: step 5/6. In terms of biological role, converts 2C-methyl-D-erythritol 2,4-cyclodiphosphate (ME-2,4cPP) into 1-hydroxy-2-methyl-2-(E)-butenyl 4-diphosphate. The polypeptide is 4-hydroxy-3-methylbut-2-en-1-yl diphosphate synthase (flavodoxin) (Pectobacterium carotovorum subsp. carotovorum (strain PC1)).